Reading from the N-terminus, the 121-residue chain is Holo-[acyl-carrier-protein] synthase (121 aa).

Mg(2+)-binding residues include D8 and E58.

The protein belongs to the P-Pant transferase superfamily. AcpS family. Mg(2+) serves as cofactor.

It is found in the cytoplasm. It catalyses the reaction apo-[ACP] + CoA = holo-[ACP] + adenosine 3',5'-bisphosphate + H(+). Transfers the 4'-phosphopantetheine moiety from coenzyme A to a Ser of acyl-carrier-protein. This Bacillus pumilus (strain SAFR-032) protein is Holo-[acyl-carrier-protein] synthase.